A 193-amino-acid polypeptide reads, in one-letter code: Probable nicotinate-nucleotide adenylyltransferase (193 aa).

It belongs to the NadD family.

The catalysed reaction is nicotinate beta-D-ribonucleotide + ATP + H(+) = deamido-NAD(+) + diphosphate. It participates in cofactor biosynthesis; NAD(+) biosynthesis; deamido-NAD(+) from nicotinate D-ribonucleotide: step 1/1. Its function is as follows. Catalyzes the reversible adenylation of nicotinate mononucleotide (NaMN) to nicotinic acid adenine dinucleotide (NaAD). The sequence is that of Probable nicotinate-nucleotide adenylyltransferase from Fusobacterium nucleatum subsp. nucleatum (strain ATCC 25586 / DSM 15643 / BCRC 10681 / CIP 101130 / JCM 8532 / KCTC 2640 / LMG 13131 / VPI 4355).